The primary structure comprises 207 residues: Holliday junction branch migration complex subunit RuvA (207 aa).

The interval 1–64 (MIGLINGQVQ…EDAQLLYGFI (64 aa)) is domain I. The interval 65–143 (DRKERDVFRQ…NIEVDSSHLE (79 aa)) is domain II. Residues 144-152 (FAMQPAPIS) are flexible linker. The tract at residues 153-207 (AEGSIIAEVEGALISLGYKEREAQQAIKAAKSNGETFADTQSLLKATLQQFQSFK) is domain III.

It belongs to the RuvA family. In terms of assembly, homotetramer. Forms an RuvA(8)-RuvB(12)-Holliday junction (HJ) complex. HJ DNA is sandwiched between 2 RuvA tetramers; dsDNA enters through RuvA and exits via RuvB. An RuvB hexamer assembles on each DNA strand where it exits the tetramer. Each RuvB hexamer is contacted by two RuvA subunits (via domain III) on 2 adjacent RuvB subunits; this complex drives branch migration. In the full resolvosome a probable DNA-RuvA(4)-RuvB(12)-RuvC(2) complex forms which resolves the HJ.

The protein resides in the cytoplasm. In terms of biological role, the RuvA-RuvB-RuvC complex processes Holliday junction (HJ) DNA during genetic recombination and DNA repair, while the RuvA-RuvB complex plays an important role in the rescue of blocked DNA replication forks via replication fork reversal (RFR). RuvA specifically binds to HJ cruciform DNA, conferring on it an open structure. The RuvB hexamer acts as an ATP-dependent pump, pulling dsDNA into and through the RuvAB complex. HJ branch migration allows RuvC to scan DNA until it finds its consensus sequence, where it cleaves and resolves the cruciform DNA. This chain is Holliday junction branch migration complex subunit RuvA, found in Psychrobacter cryohalolentis (strain ATCC BAA-1226 / DSM 17306 / VKM B-2378 / K5).